Here is a 93-residue protein sequence, read N- to C-terminus: Small ribosomal subunit protein uS19 (93 aa).

It belongs to the universal ribosomal protein uS19 family.

In terms of biological role, protein S19 forms a complex with S13 that binds strongly to the 16S ribosomal RNA. This chain is Small ribosomal subunit protein uS19, found in Dehalococcoides mccartyi (strain ATCC BAA-2266 / KCTC 15142 / 195) (Dehalococcoides ethenogenes (strain 195)).